Here is a 323-residue protein sequence, read N- to C-terminus: DNA repair and recombination protein RadA (323 aa).

ATP is bound at residue 115–122; the sequence is GEFGSGKT.

It belongs to the eukaryotic RecA-like protein family.

Functionally, involved in DNA repair and in homologous recombination. Binds and assemble on single-stranded DNA to form a nucleoprotein filament. Hydrolyzes ATP in a ssDNA-dependent manner and promotes DNA strand exchange between homologous DNA molecules. The protein is DNA repair and recombination protein RadA of Thermoplasma volcanium (strain ATCC 51530 / DSM 4299 / JCM 9571 / NBRC 15438 / GSS1).